Consider the following 250-residue polypeptide: Probable transcriptional regulatory protein PERMA_0079 (250 aa).

It belongs to the TACO1 family.

It is found in the cytoplasm. This chain is Probable transcriptional regulatory protein PERMA_0079, found in Persephonella marina (strain DSM 14350 / EX-H1).